We begin with the raw amino-acid sequence, 358 residues long: Mitogen-activated protein kinase hog-1 (358 aa).

Positions 20 to 299 (YSDLQPVGMG…ATEALSHEYL (280 aa)) constitute a Protein kinase domain. Residues 26-34 (VGMGAFGLV) and Lys49 contribute to the ATP site. The active-site Proton acceptor is Asp141. A Phosphothreonine modification is found at Thr171. Residues 171–173 (TGY) carry the TXY motif. Position 173 is a phosphotyrosine (Tyr173).

This sequence belongs to the protein kinase superfamily. Ser/Thr protein kinase family. MAP kinase subfamily. HOG1 sub-subfamily. Mg(2+) is required as a cofactor. In terms of processing, dually phosphorylated on Thr-171 and Tyr-173, which activates the enzyme. Phosphorylation is induced by fungicides and osmotic stress.

The protein localises to the cytoplasm. The protein resides in the nucleus. The catalysed reaction is L-seryl-[protein] + ATP = O-phospho-L-seryl-[protein] + ADP + H(+). It catalyses the reaction L-threonyl-[protein] + ATP = O-phospho-L-threonyl-[protein] + ADP + H(+). Activated by tyrosine and threonine phosphorylation. Proline-directed serine/threonine-protein kinase involved in a signal transduction pathway that is activated by changes in the osmolarity of the extracellular environment. Controls osmotic regulation of transcription of target genes. Involved in ion flux-mediated turgor regulation. This is Mitogen-activated protein kinase hog-1 (hog-1) from Neurospora crassa (strain ATCC 24698 / 74-OR23-1A / CBS 708.71 / DSM 1257 / FGSC 987).